Here is a 511-residue protein sequence, read N- to C-terminus: 2,3-bisphosphoglycerate-independent phosphoglycerate mutase (511 aa).

Mn(2+)-binding residues include aspartate 12 and serine 62. Serine 62 serves as the catalytic Phosphoserine intermediate. Substrate-binding positions include histidine 123, 154 to 155 (RD), arginine 181, arginine 187, 252 to 255 (RPDR), and lysine 335. Mn(2+)-binding residues include aspartate 402, histidine 406, aspartate 444, histidine 445, and histidine 462.

It belongs to the BPG-independent phosphoglycerate mutase family. In terms of assembly, monomer. Mn(2+) serves as cofactor.

It catalyses the reaction (2R)-2-phosphoglycerate = (2R)-3-phosphoglycerate. Its pathway is carbohydrate degradation; glycolysis; pyruvate from D-glyceraldehyde 3-phosphate: step 3/5. In terms of biological role, catalyzes the interconversion of 2-phosphoglycerate and 3-phosphoglycerate. In Acholeplasma laidlawii (strain PG-8A), this protein is 2,3-bisphosphoglycerate-independent phosphoglycerate mutase.